The primary structure comprises 67 residues: MPQLDTSTWLIMISSMILTLFITFHLKVSKHYFPTNPEPKHTLLLKNSAPWEEKWTKIYSPLSLPLQ.

Residues 8-24 (TWLIMISSMILTLFITF) form a helical membrane-spanning segment. Position 54 is an N6-acetyllysine; alternate (Lys-54). Lys-54 carries the post-translational modification N6-succinyllysine; alternate. Lys-57 bears the N6-acetyllysine mark.

The protein belongs to the ATPase protein 8 family. As to quaternary structure, component of the ATP synthase complex composed at least of ATP5F1A/subunit alpha, ATP5F1B/subunit beta, ATP5MC1/subunit c (homooctomer), MT-ATP6/subunit a, MT-ATP8/subunit 8, ATP5ME/subunit e, ATP5MF/subunit f, ATP5MG/subunit g, ATP5MK/subunit k, ATP5MJ/subunit j, ATP5F1C/subunit gamma, ATP5F1D/subunit delta, ATP5F1E/subunit epsilon, ATP5PF/subunit F6, ATP5PB/subunit b, ATP5PD/subunit d, ATP5PO/subunit OSCP. ATP synthase complex consists of a soluble F(1) head domain (subunits alpha(3) and beta(3)) - the catalytic core - and a membrane F(0) domain - the membrane proton channel (subunits c, a, 8, e, f, g, k and j). These two domains are linked by a central stalk (subunits gamma, delta, and epsilon) rotating inside the F1 region and a stationary peripheral stalk (subunits F6, b, d, and OSCP). Interacts with PRICKLE3.

Its subcellular location is the mitochondrion membrane. In terms of biological role, subunit 8, of the mitochondrial membrane ATP synthase complex (F(1)F(0) ATP synthase or Complex V) that produces ATP from ADP in the presence of a proton gradient across the membrane which is generated by electron transport complexes of the respiratory chain. ATP synthase complex consist of a soluble F(1) head domain - the catalytic core - and a membrane F(1) domain - the membrane proton channel. These two domains are linked by a central stalk rotating inside the F(1) region and a stationary peripheral stalk. During catalysis, ATP synthesis in the catalytic domain of F(1) is coupled via a rotary mechanism of the central stalk subunits to proton translocation. In vivo, can only synthesize ATP although its ATP hydrolase activity can be activated artificially in vitro. Part of the complex F(0) domain. This Halichoerus grypus (Gray seal) protein is ATP synthase F(0) complex subunit 8.